The chain runs to 1368 residues: DNA-directed RNA polymerase subunit beta (1368 aa).

The protein belongs to the RNA polymerase beta chain family. As to quaternary structure, the RNAP catalytic core consists of 2 alpha, 1 beta, 1 beta' and 1 omega subunit. When a sigma factor is associated with the core the holoenzyme is formed, which can initiate transcription.

It carries out the reaction RNA(n) + a ribonucleoside 5'-triphosphate = RNA(n+1) + diphosphate. In terms of biological role, DNA-dependent RNA polymerase catalyzes the transcription of DNA into RNA using the four ribonucleoside triphosphates as substrates. In Cupriavidus metallidurans (strain ATCC 43123 / DSM 2839 / NBRC 102507 / CH34) (Ralstonia metallidurans), this protein is DNA-directed RNA polymerase subunit beta.